The following is a 241-amino-acid chain: Aliphatic sulfonates import ATP-binding protein SsuB (241 aa).

Positions 10–226 (VHLHGFSRSF…RPDHPAFMQL (217 aa)) constitute an ABC transporter domain. An ATP-binding site is contributed by 42–49 (GESGSGKT).

Belongs to the ABC transporter superfamily. Aliphatic sulfonates importer (TC 3.A.1.17.2) family. As to quaternary structure, the complex is composed of two ATP-binding proteins (SsuB), two transmembrane proteins (SsuC) and a solute-binding protein (SsuA).

The protein resides in the cell inner membrane. It carries out the reaction ATP + H2O + aliphatic sulfonate-[sulfonate-binding protein]Side 1 = ADP + phosphate + aliphatic sulfonateSide 2 + [sulfonate-binding protein]Side 1.. Functionally, part of the ABC transporter complex SsuABC involved in aliphatic sulfonates import. Responsible for energy coupling to the transport system. The sequence is that of Aliphatic sulfonates import ATP-binding protein SsuB from Delftia acidovorans (Pseudomonas acidovorans).